Consider the following 114-residue polypeptide: Photosystem II reaction center Psb28 protein (114 aa).

Belongs to the Psb28 family. Part of the photosystem II complex.

It localises to the cellular thylakoid membrane. The chain is Photosystem II reaction center Psb28 protein from Rippkaea orientalis (strain PCC 8801 / RF-1) (Cyanothece sp. (strain PCC 8801)).